We begin with the raw amino-acid sequence, 24 residues long: Unknown protein NF004 from 2D-PAGE (24 aa).

The polypeptide is Unknown protein NF004 from 2D-PAGE (Naegleria fowleri (Brain eating amoeba)).